The sequence spans 248 residues: Protein UL24 homolog (248 aa).

Residues 194-248 are disordered; that stretch reads DRPRPTAQGHRPRTHVGPKPSQLTARVPRSARAGRAGGRKGQVGAVGQVCPGAQK. Residues 218–227 are compositionally biased toward low complexity; that stretch reads ARVPRSARAG.

Belongs to the herpesviridae UL24 family.

Its subcellular location is the virion. The protein resides in the host cytoplasm. It is found in the host nucleus. It localises to the host nucleolus. The protein localises to the host Golgi apparatus. Its function is as follows. May participate in nuclear egress of viral particles. Plays a role in the dispersal of several host nucleolar proteins including NCL/nucleolin and NPM1. Since deletion of host NCL/nucleolin negatively impact on nuclear egress, UL24 supposedly acts on this process through its effect on host nucleoli. The protein is Protein UL24 homolog of Homo sapiens (Human).